We begin with the raw amino-acid sequence, 843 residues long: N-acetyltransferase ESCO1 (843 aa).

Residues 1–78 (MSIQEKSKEN…SASCSADKTA (78 aa)) form a disordered region. The segment covering 18–28 (SEDENLEEEVE) has biased composition (acidic residues). The span at 66–78 (STRSASCSADKTA) shows a compositional bias: polar residues. Ser-202 bears the Phosphoserine mark. Residues 262 to 300 (NELRKSAHTQVSTSTKRPQIPLPLVPEHSDDQELEQAGK) form a disordered region. A compositionally biased stretch (polar residues) spans 269–278 (HTQVSTSTKR). A Glycyl lysine isopeptide (Lys-Gly) (interchain with G-Cter in SUMO2) cross-link involves residue Lys-335. At Ser-415 the chain carries Phosphoserine. Positions 546 to 584 (DRTFPGSAPNQQHSVLSDEASINRKNRDVPPNHSQLKHD) are disordered. The segment covering 566-584 (SINRKNRDVPPNHSQLKHD) has biased composition (basic and acidic residues). The CCHH-type zinc-finger motif lies at 620–644 (VSCNICGMLYTASNPEDETQHLLFH). Residues 775–777 (IWV), 783–788 (RKKIAS), and 815–817 (TPD) contribute to the acetyl-CoA site.

This sequence belongs to the acetyltransferase family. ECO subfamily. The subunit structure is controversial. Monomer. Homodimer. Phosphorylated during mitosis.

Its subcellular location is the nucleus. It localises to the chromosome. It carries out the reaction L-lysyl-[protein] + acetyl-CoA = N(6)-acetyl-L-lysyl-[protein] + CoA + H(+). Functionally, acetyltransferase required for the establishment of sister chromatid cohesion. Couples the processes of cohesion and DNA replication to ensure that only sister chromatids become paired together. In contrast to the structural cohesins, the deposition and establishment factors are required only during S phase. Acts by mediating the acetylation of cohesin component SMC3. This chain is N-acetyltransferase ESCO1 (Esco1), found in Mus musculus (Mouse).